The primary structure comprises 219 residues: 16S rRNA (adenine(1408)-N(1))-methyltransferase (219 aa).

Residues G32, N38, D55, 87-88 (AE), 104-109 (LFPWGT), and 195-197 (SLW) contribute to the S-adenosyl-L-methionine site.

The protein belongs to the methyltransferase superfamily. Kanamycin-apramycin resistance family.

It catalyses the reaction adenosine(1408) in 16S rRNA + S-adenosyl-L-methionine = N(1)-methyladenosine(1408) in 16S rRNA + S-adenosyl-L-homocysteine + H(+). Its function is as follows. Specifically methylates the N(1) position of adenine 1408 in 16S rRNA. Confers resistance to various aminoglycosides, including kanamycin, neomycin, apramycin, ribostamycin and gentamicin. Methylates only fully assembled 30S subunits. This Escherichia coli protein is 16S rRNA (adenine(1408)-N(1))-methyltransferase (npmA).